The chain runs to 517 residues: Diacylglycerol O-acyltransferase 1C (517 aa).

A disordered region spans residues 1 to 82 (MAISDVPAAA…NVGAAANDAG (82 aa)). Residues 8–17 (AAAGTTATTT) show a composition bias toward low complexity. A compositionally biased stretch (basic and acidic residues) spans 53-64 (ITDDDNIKDHKP). Residues 71-81 (DDNVGAAANDA) show a composition bias toward low complexity. The next 7 helical transmembrane spans lie at 121-141 (HAGL…RLII), 165-185 (WPLF…FVVE), 197-217 (VVVL…VLVI), 222-242 (SAFV…LKLV), 272-292 (YPYT…TLCY), 305-325 (GWVF…GFII), and 361-381 (VWLC…AELV). Positions 388-394 (FYKDWWN) match the FYXDWWN motif motif. Transmembrane regions (helical) follow at residues 429–449 (GAAS…CIAV), 451–471 (CHMF…LVLI), and 484–504 (VGNM…SVLL). H443 is an active-site residue.

Belongs to the membrane-bound acyltransferase family. Sterol o-acyltransferase subfamily.

It is found in the endoplasmic reticulum membrane. The enzyme catalyses an acyl-CoA + a 1,2-diacyl-sn-glycerol = a triacyl-sn-glycerol + CoA. The protein operates within glycerolipid metabolism; triacylglycerol biosynthesis. Its function is as follows. Involved in triacylglycerol (TAG) synthesis. Catalyzes the acylation of the sn-3 hydroxy group of sn-1,2-diacylglycerol using acyl-CoA. This Glycine max (Soybean) protein is Diacylglycerol O-acyltransferase 1C.